The sequence spans 506 residues: Ribose import ATP-binding protein RbsA 2 (506 aa).

2 ABC transporter domains span residues 7 to 242 (LEMR…VGRP) and 250 to 497 (ERDI…TGVN). 39–46 (GENGAGKS) contributes to the ATP binding site.

Belongs to the ABC transporter superfamily. Ribose importer (TC 3.A.1.2.1) family. In terms of assembly, the complex is composed of an ATP-binding protein (RbsA), two transmembrane proteins (RbsC) and a solute-binding protein (RbsB).

Its subcellular location is the cell inner membrane. It carries out the reaction D-ribose(out) + ATP + H2O = D-ribose(in) + ADP + phosphate + H(+). Its function is as follows. Part of the ABC transporter complex RbsABC involved in ribose import. Responsible for energy coupling to the transport system. The protein is Ribose import ATP-binding protein RbsA 2 of Escherichia coli O157:H7.